The sequence spans 171 residues: PRA1-like protein (171 aa).

Transmembrane regions (helical) follow at residues 67–87, 119–139, and 140–160; these read AIIA…LIVI, VILA…ETII, and WLVG…EPPV.

The protein belongs to the PRA1 family.

It localises to the membrane. The chain is PRA1-like protein from Schizosaccharomyces pombe (strain 972 / ATCC 24843) (Fission yeast).